Here is a 334-residue protein sequence, read N- to C-terminus: Protein CUP-SHAPED COTYLEDON 3 (334 aa).

Residues 22 to 171 (LPPGFRFHPT…EWVICRVFNK (150 aa)) enclose the NAC domain. Residues 121 to 177 (VGMKKTLVFYKGRAPRGLKTKWVMHEYRLENDHSHRHTCKEEWVICRVFNKTGDRKN) mediate DNA binding.

In a general manner, present at the boundaries between mersitems and araising primordia.

Its subcellular location is the nucleus. Functionally, transcription activator. Involved in molecular mechanisms regulating shoot apical meristem (SAM) formation during embryogenesis and organ separation. Required for axillary meristem initiation and separation of the meristem from the main stem. May act as an inhibitor of cell division. The chain is Protein CUP-SHAPED COTYLEDON 3 (NAC031) from Arabidopsis thaliana (Mouse-ear cress).